Consider the following 143-residue polypeptide: Transcriptional regulator MraZ (143 aa).

2 consecutive SpoVT-AbrB domains span residues 5–47 and 76–119; these read EYEH…TLEE and AVEV…DRET.

It belongs to the MraZ family. As to quaternary structure, forms oligomers.

The protein localises to the cytoplasm. The protein resides in the nucleoid. This chain is Transcriptional regulator MraZ, found in Staphylococcus saprophyticus subsp. saprophyticus (strain ATCC 15305 / DSM 20229 / NCIMB 8711 / NCTC 7292 / S-41).